A 79-amino-acid polypeptide reads, in one-letter code: Acyl carrier protein (79 aa).

The region spanning 2–77 (SEIGERVKKI…DATKFLEKNA (76 aa)) is the Carrier domain. The residue at position 37 (Ser-37) is an O-(pantetheine 4'-phosphoryl)serine.

The protein belongs to the acyl carrier protein (ACP) family. 4'-phosphopantetheine is transferred from CoA to a specific serine of apo-ACP by AcpS. This modification is essential for activity because fatty acids are bound in thioester linkage to the sulfhydryl of the prosthetic group.

The protein localises to the cytoplasm. Its pathway is lipid metabolism; fatty acid biosynthesis. Carrier of the growing fatty acid chain in fatty acid biosynthesis. In Rhodopseudomonas palustris (strain HaA2), this protein is Acyl carrier protein.